A 692-amino-acid polypeptide reads, in one-letter code: Elongation factor G (692 aa).

Residues E8 to L283 form the tr-type G domain. Residues A17 to T24, D81 to H85, and N135 to D138 contribute to the GTP site.

The protein belongs to the TRAFAC class translation factor GTPase superfamily. Classic translation factor GTPase family. EF-G/EF-2 subfamily.

It is found in the cytoplasm. Its function is as follows. Catalyzes the GTP-dependent ribosomal translocation step during translation elongation. During this step, the ribosome changes from the pre-translocational (PRE) to the post-translocational (POST) state as the newly formed A-site-bound peptidyl-tRNA and P-site-bound deacylated tRNA move to the P and E sites, respectively. Catalyzes the coordinated movement of the two tRNA molecules, the mRNA and conformational changes in the ribosome. The chain is Elongation factor G from Caulobacter sp. (strain K31).